The following is a 65-amino-acid chain: Small, acid-soluble spore protein H 3 (65 aa).

Belongs to the SspH family.

The protein localises to the spore core. The polypeptide is Small, acid-soluble spore protein H 3 (Geobacillus thermodenitrificans (strain NG80-2)).